Here is a 398-residue protein sequence, read N- to C-terminus: Deoxyguanosinetriphosphate triphosphohydrolase-like protein (398 aa).

The HD domain maps to 68–215 (RLTHTLEVAQ…AAISDDIAYD (148 aa)).

Belongs to the dGTPase family. Type 2 subfamily.

In Azorhizobium caulinodans (strain ATCC 43989 / DSM 5975 / JCM 20966 / LMG 6465 / NBRC 14845 / NCIMB 13405 / ORS 571), this protein is Deoxyguanosinetriphosphate triphosphohydrolase-like protein.